A 289-amino-acid polypeptide reads, in one-letter code: NFIL3 like protein (289 aa).

The disordered stretch occupies residues 1–27; sequence MDVGFSGLPDVSQSHSKTLWGARGRGP. One can recognise a bZIP domain in the interval 42–105; the sequence is DTVYWEKRRK…GLLPLTGGPR (64 aa). Residues 48-64 form a basic motif region; it reads KRRKNNEAAKRSREKRR. Residues 70-91 are leucine-zipper; the sequence is IEGRLAALMEENALLKGELKAL.

This sequence belongs to the bZIP family. NFIL3 subfamily.

It localises to the nucleus. This chain is NFIL3 like protein, found in Homo sapiens (Human).